Reading from the N-terminus, the 557-residue chain is Urocanate hydratase (557 aa).

NAD(+) contacts are provided by residues 53–54, Gln-131, 177–179, 197–202, 243–244, 264–268, 274–275, and 323–324; these read GG, GMG, ECQQSR, NA, QTSAH, YL, and YG. Cys-411 is an active-site residue. Residues 455–456 and Gly-493 contribute to the NAD(+) site; that span reads RE.

Homodimer. NAD(+) serves as cofactor.

Its subcellular location is the cytoplasm. It catalyses the reaction 4-imidazolone-5-propanoate = trans-urocanate + H2O. Its pathway is amino-acid degradation; L-histidine degradation into L-glutamate; N-formimidoyl-L-glutamate from L-histidine: step 2/3. Functionally, catalyzes the conversion of urocanate to 4-imidazolone-5-propionate. This is Urocanate hydratase from Pseudomonas putida (Arthrobacter siderocapsulatus).